We begin with the raw amino-acid sequence, 402 residues long: Acetyl-CoA acetyltransferase (402 aa).

Cysteine 90 functions as the Acyl-thioester intermediate in the catalytic mechanism. CoA-binding residues include tyrosine 185 and lysine 230. Tyrosine 185 lines the K(+) pocket. Alanine 250 contributes to the K(+) binding site. Residue serine 251 coordinates CoA. Position 348 (valine 348) interacts with K(+). Active-site proton acceptor residues include histidine 352 and cysteine 382.

This sequence belongs to the thiolase-like superfamily. Thiolase family. Homotetramer.

The protein localises to the cytoplasm. It localises to the cytosol. It catalyses the reaction 2 acetyl-CoA = acetoacetyl-CoA + CoA. It functions in the pathway metabolic intermediate biosynthesis; (R)-mevalonate biosynthesis; (R)-mevalonate from acetyl-CoA: step 1/3. Acetyl-CoA acetyltransferase; part of the first module of ergosterol biosynthesis pathway that includes the early steps of the pathway, conserved across all eukaryotes, and which results in the formation of mevalonate from acetyl-coenzyme A (acetyl-CoA). ERG10 catalyzes the formation of acetoacetyl-CoA from acetyl-CoA. The first module starts with the action of the cytosolic acetyl-CoA acetyltransferase ERG10 that catalyzes the formation of acetoacetyl-CoA. The hydroxymethylglutaryl-CoA synthase ERG13 then condenses acetyl-CoA with acetoacetyl-CoA to form HMG-CoA. The 3-hydroxy-3-methylglutaryl-coenzyme A (HMG-CoA) reductase HMG1 finally reduces HMG-CoA to produce mevalonate. The sequence is that of Acetyl-CoA acetyltransferase from Candida albicans (strain SC5314 / ATCC MYA-2876) (Yeast).